A 244-amino-acid polypeptide reads, in one-letter code: MPLILLPAVDVVEGRAVRLVQGKAGSQTEYGSAVDAALGWQRDGAEWIHLVDLDAAFGRGSNHELLAEVVGKLDVQVELSGGIRDDESLAAALATGCARVNVGTAALENPQWCARVIGEHGDQVAVGLDVQIIDGEHRLRGRGWETDGGDLWDVLERLDSEGCSRFVVTDITKDGTLGGPNLDLLAGVADRTDAPVIASGGVSSLDDLRAIATLTHRGVEGAIVGKALYARRFTLPQALAAVRD.

Catalysis depends on D10, which acts as the Proton acceptor. D129 functions as the Proton donor in the catalytic mechanism.

Belongs to the HisA/HisF family.

Its subcellular location is the cytoplasm. It carries out the reaction 1-(5-phospho-beta-D-ribosyl)-5-[(5-phospho-beta-D-ribosylamino)methylideneamino]imidazole-4-carboxamide = 5-[(5-phospho-1-deoxy-D-ribulos-1-ylimino)methylamino]-1-(5-phospho-beta-D-ribosyl)imidazole-4-carboxamide. The enzyme catalyses N-(5-phospho-beta-D-ribosyl)anthranilate = 1-(2-carboxyphenylamino)-1-deoxy-D-ribulose 5-phosphate. The protein operates within amino-acid biosynthesis; L-histidine biosynthesis; L-histidine from 5-phospho-alpha-D-ribose 1-diphosphate: step 4/9. It functions in the pathway amino-acid biosynthesis; L-tryptophan biosynthesis; L-tryptophan from chorismate: step 3/5. Functionally, involved in both the histidine and tryptophan biosynthetic pathways. This Mycobacterium tuberculosis (strain CDC 1551 / Oshkosh) protein is Phosphoribosyl isomerase A (priA).